We begin with the raw amino-acid sequence, 315 residues long: Probable carboxylesterase 3 (315 aa).

Met-1 is subject to N-acetylmethionine. An Involved in the stabilization of the negatively charged intermediate by the formation of the oxyanion hole motif is present at residues 81-83 (HGG). Catalysis depends on residues Ser-160, Asp-258, and His-290.

This sequence belongs to the 'GDXG' lipolytic enzyme family. Expressed in flowers and siliques.

It carries out the reaction a carboxylic ester + H2O = an alcohol + a carboxylate + H(+). Its function is as follows. Carboxylesterase acting on esters with varying acyl chain length. This is Probable carboxylesterase 3 (CXE3) from Arabidopsis thaliana (Mouse-ear cress).